The primary structure comprises 241 residues: Demethylmenaquinone methyltransferase (241 aa).

S-adenosyl-L-methionine-binding positions include Thr-60, Asp-81, and 106–107 (DA).

It belongs to the class I-like SAM-binding methyltransferase superfamily. MenG/UbiE family.

It carries out the reaction a 2-demethylmenaquinol + S-adenosyl-L-methionine = a menaquinol + S-adenosyl-L-homocysteine + H(+). The protein operates within quinol/quinone metabolism; menaquinone biosynthesis; menaquinol from 1,4-dihydroxy-2-naphthoate: step 2/2. In terms of biological role, methyltransferase required for the conversion of demethylmenaquinol (DMKH2) to menaquinol (MKH2). This is Demethylmenaquinone methyltransferase from Staphylococcus aureus (strain Mu3 / ATCC 700698).